The following is a 174-amino-acid chain: Keratin-associated protein 1-5 (174 aa).

Residues 3–172 (CCQTSFCGYP…CCRPVCCCEP (170 aa)) form a 15 X 5 AA repeats of C-C-[QEPVRC]-[TPIVLE]-[SRHVP] region.

This sequence belongs to the KRTAP type 1 family. In terms of assembly, interacts with hair keratins. In terms of tissue distribution, expressed in the middle/upper portions of the hair cortex, in the region termed the keratogenous zone.

In the hair cortex, hair keratin intermediate filaments are embedded in an interfilamentous matrix, consisting of hair keratin-associated proteins (KRTAP), which are essential for the formation of a rigid and resistant hair shaft through their extensive disulfide bond cross-linking with abundant cysteine residues of hair keratins. The matrix proteins include the high-sulfur and high-glycine-tyrosine keratins. The protein is Keratin-associated protein 1-5 (KRTAP1-5) of Homo sapiens (Human).